Here is a 957-residue protein sequence, read N- to C-terminus: Glycine dehydrogenase (decarboxylating) (957 aa).

N6-(pyridoxal phosphate)lysine is present on K708.

Belongs to the GcvP family. In terms of assembly, the glycine cleavage system is composed of four proteins: P, T, L and H. Pyridoxal 5'-phosphate serves as cofactor.

The catalysed reaction is N(6)-[(R)-lipoyl]-L-lysyl-[glycine-cleavage complex H protein] + glycine + H(+) = N(6)-[(R)-S(8)-aminomethyldihydrolipoyl]-L-lysyl-[glycine-cleavage complex H protein] + CO2. In terms of biological role, the glycine cleavage system catalyzes the degradation of glycine. The P protein binds the alpha-amino group of glycine through its pyridoxal phosphate cofactor; CO(2) is released and the remaining methylamine moiety is then transferred to the lipoamide cofactor of the H protein. The polypeptide is Glycine dehydrogenase (decarboxylating) (Shigella sonnei (strain Ss046)).